The following is a 309-amino-acid chain: Small ribosomal subunit protein uS7m (309 aa).

Positions 39-86 are disordered; it reads DSTTSSRLPPRVQIQQQQQQRTQPYSTETTPPPNSNNGDLAGIEGQPP. Positions 51–61 are enriched in low complexity; it reads QIQQQQQQRTQ.

This sequence belongs to the universal ribosomal protein uS7 family. Component of the mitochondrial small ribosomal subunit (mt-SSU). Mature N.crassa 74S mitochondrial ribosomes consist of a small (37S) and a large (54S) subunit. The 37S small subunit contains a 16S ribosomal RNA (16S mt-rRNA) and 32 different proteins. The 54S large subunit contains a 23S rRNA (23S mt-rRNA) and 42 different proteins.

It localises to the mitochondrion. Functionally, component of the mitochondrial ribosome (mitoribosome), a dedicated translation machinery responsible for the synthesis of mitochondrial genome-encoded proteins, including at least some of the essential transmembrane subunits of the mitochondrial respiratory chain. The mitoribosomes are attached to the mitochondrial inner membrane and translation products are cotranslationally integrated into the membrane. This chain is Small ribosomal subunit protein uS7m (rsm7), found in Neurospora crassa (strain ATCC 24698 / 74-OR23-1A / CBS 708.71 / DSM 1257 / FGSC 987).